The following is a 397-amino-acid chain: Pyridinium-3,5-bisthiocarboxylic acid mononucleotide nickel insertion protein (397 aa).

It belongs to the LarC family.

The enzyme catalyses Ni(II)-pyridinium-3,5-bisthiocarboxylate mononucleotide = pyridinium-3,5-bisthiocarboxylate mononucleotide + Ni(2+). In terms of biological role, involved in the biosynthesis of a nickel-pincer cofactor ((SCS)Ni(II) pincer complex). Binds Ni(2+), and functions in nickel delivery to pyridinium-3,5-bisthiocarboxylic acid mononucleotide (P2TMN), to form the mature cofactor. Is thus probably required for the activation of nickel-pincer cofactor-dependent enzymes. The polypeptide is Pyridinium-3,5-bisthiocarboxylic acid mononucleotide nickel insertion protein (Thermotoga petrophila (strain ATCC BAA-488 / DSM 13995 / JCM 10881 / RKU-1)).